The primary structure comprises 862 residues: Transcription factor E2F7 (862 aa).

DNA-binding regions lie at residues 140–209 and 279–364; these read RKQK…CWHG and RKDK…KWIG. 3 disordered regions span residues 561–592, 617–643, and 788–862; these read PGSD…DAPL, TPEQ…NVGE, and KADS…SAGN. The span at 564–574 shows a compositional bias: polar residues; that stretch reads DSPTLEETTMS. Over residues 575 to 590 the composition is skewed to basic and acidic residues; the sequence is KQERPTKRQLNDKDDA. Composition is skewed to polar residues over residues 633–643 and 832–851; these read EPVTKHSNVGE and DVSS…SSAQ.

It belongs to the E2F/DP family. Homodimer and heterodimer: mainly forms homodimers and, to a lesser extent, heterodimers with e2f8.

It localises to the nucleus. In terms of biological role, atypical E2F transcription factor that participates in various processes such as angiogenesis and polyploidization of specialized cells. Mainly acts as a transcription repressor that binds DNA independently of DP proteins and specifically recognizes the E2 recognition site 5'-TTTC[CG]CGC-3'. Directly represses transcription of classical E2F transcription factors such as e2f1. Acts as a regulator of S-phase by recognizing and binding the E2-related site 5'-TTCCCGCC-3' and mediating repression of G1/S-regulated genes. Acts as a promoter of sprouting angiogenesis, possibly by acting as a transcription activator. The chain is Transcription factor E2F7 (e2f7) from Xenopus tropicalis (Western clawed frog).